Here is a 318-residue protein sequence, read N- to C-terminus: UDP-N-acetylenolpyruvoylglucosamine reductase (318 aa).

The 164-residue stretch at 39 to 202 (VGGPADLLVR…TRVQLTLRPG (164 aa)) folds into the FAD-binding PCMH-type domain. R182 is an active-site residue. Residues 214–223 (DRDGRRRTQP) are compositionally biased toward basic and acidic residues. The disordered stretch occupies residues 214-235 (DRDGRRRTQPLDRPTFGSTFTN). S231 serves as the catalytic Proton donor. Residue E301 is part of the active site.

Belongs to the MurB family. Requires FAD as cofactor.

It localises to the cytoplasm. It catalyses the reaction UDP-N-acetyl-alpha-D-muramate + NADP(+) = UDP-N-acetyl-3-O-(1-carboxyvinyl)-alpha-D-glucosamine + NADPH + H(+). Its pathway is cell wall biogenesis; peptidoglycan biosynthesis. Functionally, cell wall formation. The sequence is that of UDP-N-acetylenolpyruvoylglucosamine reductase from Anaeromyxobacter sp. (strain Fw109-5).